A 106-amino-acid polypeptide reads, in one-letter code: Large ribosomal subunit protein bL21 (106 aa).

Belongs to the bacterial ribosomal protein bL21 family. In terms of assembly, part of the 50S ribosomal subunit. Contacts protein L20.

In terms of biological role, this protein binds to 23S rRNA in the presence of protein L20. The protein is Large ribosomal subunit protein bL21 of Fervidobacterium nodosum (strain ATCC 35602 / DSM 5306 / Rt17-B1).